A 184-amino-acid chain; its full sequence is Peptide deformylase 2 (184 aa).

Positions 110 and 153 each coordinate Fe cation. Residue glutamate 154 is part of the active site. Fe cation is bound at residue histidine 157.

This sequence belongs to the polypeptide deformylase family. The cofactor is Fe(2+).

It carries out the reaction N-terminal N-formyl-L-methionyl-[peptide] + H2O = N-terminal L-methionyl-[peptide] + formate. Functionally, removes the formyl group from the N-terminal Met of newly synthesized proteins. Requires at least a dipeptide for an efficient rate of reaction. N-terminal L-methionine is a prerequisite for activity but the enzyme has broad specificity at other positions. This chain is Peptide deformylase 2, found in Bacillus cereus (strain ATCC 14579 / DSM 31 / CCUG 7414 / JCM 2152 / NBRC 15305 / NCIMB 9373 / NCTC 2599 / NRRL B-3711).